A 400-amino-acid chain; its full sequence is MAKQKFDRSKPHCNVGTIGHVDHGKTTLTAAITKTLSTKGWADFRAYDQIDNAPEEKARGLTIAISHIEYQTETRHYAHIDCPGHADYIKNMITGAAQMDGAILVVSAPDGPMPQTREHVLLIHQVEVPAVVVALNKCDMMDDEELLELVELEVRELLTKNSFPGDEIPVVRVSAIKALECGCGKRECEWCGRIWKLMDAVDTYIPIPPRPVDKPFLMKVEDVFSIKGRGTVATGRVERGVIKGGDEVDLVGLHHEPRKIVVTSLEMFHKILDTAEPGDAVGLLLRGVEREDIERGMVLAKPGSIKPHVNAEAEVYVLSKDEGGRHTPFFNGYKPQFFFGTTDVTGEIHLPEGVEMVVPGDHVKMKISTIYPVAMEKGMRFAIREGGKTVGAGAISQVLA.

The tr-type G domain maps to 10 to 210 (KPHCNVGTIG…VDTYIPIPPR (201 aa)). A G1 region spans residues 19 to 26 (GHVDHGKT). Residue 19–26 (GHVDHGKT) coordinates GTP. Thr-26 is a Mg(2+) binding site. Residues 60–64 (GLTIA) form a G2 region. The segment at 81–84 (DCPG) is G3. GTP contacts are provided by residues 81 to 85 (DCPGH) and 136 to 139 (NKCD). The tract at residues 136-139 (NKCD) is G4. A G5 region spans residues 174-176 (SAI).

Belongs to the TRAFAC class translation factor GTPase superfamily. Classic translation factor GTPase family. EF-Tu/EF-1A subfamily. Monomer.

It is found in the cytoplasm. The catalysed reaction is GTP + H2O = GDP + phosphate + H(+). Its function is as follows. GTP hydrolase that promotes the GTP-dependent binding of aminoacyl-tRNA to the A-site of ribosomes during protein biosynthesis. The chain is Elongation factor Tu from Dehalococcoides mccartyi (strain CBDB1).